The primary structure comprises 235 residues: Ribosomal RNA small subunit methyltransferase G (235 aa).

Residues G98, M103, 149-150, and R164 contribute to the S-adenosyl-L-methionine site; that span reads VE.

It belongs to the methyltransferase superfamily. RNA methyltransferase RsmG family.

The protein localises to the cytoplasm. The enzyme catalyses guanosine(527) in 16S rRNA + S-adenosyl-L-methionine = N(7)-methylguanosine(527) in 16S rRNA + S-adenosyl-L-homocysteine. Its function is as follows. Specifically methylates the N7 position of guanine in position 527 of 16S rRNA. The protein is Ribosomal RNA small subunit methyltransferase G of Cupriavidus metallidurans (strain ATCC 43123 / DSM 2839 / NBRC 102507 / CH34) (Ralstonia metallidurans).